A 421-amino-acid chain; its full sequence is Peroxisomal succinyl-coenzyme A thioesterase (421 aa).

Residue Ser-232 is the Charge relay system of the active site. Lys-313 bears the N6-succinyllysine mark. Catalysis depends on charge relay system residues Asp-326 and His-360. The Microbody targeting signal motif lies at 419–421; the sequence is CRL.

This sequence belongs to the C/M/P thioester hydrolase family. As to expression, mainly expressed in liver and kidney. Weakly expressed in other tissues including intestine, adrenal gland and adipose tissues.

The protein localises to the peroxisome. The enzyme catalyses succinyl-CoA + H2O = succinate + CoA + H(+). It catalyses the reaction glutaryl-CoA + H2O = glutarate + CoA + H(+). Its pathway is lipid metabolism; fatty acid metabolism. In terms of biological role, catalyzes the hydrolysis of acyl-CoAs into free fatty acids and coenzyme A (CoASH), regulating their respective intracellular levels. In contrast to its human ortholog, functions essentially as a succinyl-CoA thioesterase with no activity with medium to long chain saturated acyl-CoAs and with a low activity toward glutaryl-CoA. In Mus musculus (Mouse), this protein is Peroxisomal succinyl-coenzyme A thioesterase (Acot4).